Consider the following 348-residue polypeptide: Methylthioribose-1-phosphate isomerase (348 aa).

Substrate is bound by residues 46–48, R88, and Q194; that span reads RGA. The active-site Proton donor is D235. 245-246 is a binding site for substrate; sequence NK.

The protein belongs to the eIF-2B alpha/beta/delta subunits family. MtnA subfamily.

The catalysed reaction is 5-(methylsulfanyl)-alpha-D-ribose 1-phosphate = 5-(methylsulfanyl)-D-ribulose 1-phosphate. It participates in amino-acid biosynthesis; L-methionine biosynthesis via salvage pathway; L-methionine from S-methyl-5-thio-alpha-D-ribose 1-phosphate: step 1/6. In terms of biological role, catalyzes the interconversion of methylthioribose-1-phosphate (MTR-1-P) into methylthioribulose-1-phosphate (MTRu-1-P). The chain is Methylthioribose-1-phosphate isomerase from Desulforudis audaxviator (strain MP104C).